The following is a 1428-amino-acid chain: uncharacterized protein (1428 aa).

Disordered regions lie at residues 1 to 53, 249 to 274, and 377 to 413; these read MAKK…AFKV, DIKH…KDSK, and KNGI…ETRA. Over residues 16-33 the composition is skewed to polar residues; sequence ATTSIPSRSASSPANKNQ. A compositionally biased stretch (basic and acidic residues) spans 34 to 51; that stretch reads VKGEKNNKTQKVEPKNAF. A compositionally biased stretch (polar residues) spans 256 to 265; it reads KETQPSNQVD. Residues 641–811 form the Helicase ATP-binding domain; it reads IDAVNNSQLL…FEGSNLITIP (171 aa). An ATP-binding site is contributed by 654 to 661; that stretch reads GDTGCGKS. The DEAH box motif lies at 758 to 761; that stretch reads DEVH. A Helicase C-terminal domain is found at 886 to 1064; the sequence is LIVYLLKYIF…EVVLRVKMCQ (179 aa).

Belongs to the helicase family. SKI2 subfamily.

The protein resides in the cytoplasm. This is an uncharacterized protein from Schizosaccharomyces pombe (strain 972 / ATCC 24843) (Fission yeast).